A 371-amino-acid chain; its full sequence is Nicotinate-nucleotide pyrophosphorylase [carboxylating], chloroplastic (371 aa).

Residues 1 to 48 (MPAAAAAAAPPNPNVLQLAPRLRGLVSFPSSYSSSSPFSNRLRLRLPR) constitute a chloroplast transit peptide. Residues Arg162, 193–195 (TRK), Arg217, Lys227, Glu260, Asp287, 319–321 (SGN), and 340–342 (SGA) contribute to the substrate site.

Belongs to the NadC/ModD family.

Its subcellular location is the plastid. It is found in the chloroplast. It catalyses the reaction nicotinate beta-D-ribonucleotide + CO2 + diphosphate = quinolinate + 5-phospho-alpha-D-ribose 1-diphosphate + 2 H(+). It functions in the pathway cofactor biosynthesis; NAD(+) biosynthesis; nicotinate D-ribonucleotide from quinolinate: step 1/1. Its function is as follows. Involved in the catabolism of quinolinic acid (QA). The sequence is that of Nicotinate-nucleotide pyrophosphorylase [carboxylating], chloroplastic from Oryza sativa subsp. japonica (Rice).